A 1185-amino-acid chain; its full sequence is MWREDLPLIELNNFEALQIGLASPEQIREWSRGEVKKPETINYRTLKPEKDGLFCERIFGPIKDWECHCGKYKRVRYKGIVCDRCGVEVTKSKVRRERMGHIELAAPVSHIWYFKGIPSRMGLILDMSPRSLEKVLYFASYVVLDPKETPLLKKQLLSEKEYRESVDKYGEEAFDAEMGAEAVKKLLAEIDLEQLSKELKEALKTSTGQKKVRTIRRLEVVESFRKSTNRPEWMIIDVIPVIPPDLRPMVQLDGGRFATSDLNDLYRRVINRNNRLKKLLDLGAPDIIVRNEKRMLQEAVDALIDNGRRGRPVTGPGNRPLKSLSDMLKGKQGRFRQNLLGKRVDYSGRSVIVVGPELKMYQCGLPKEMALELFKPFVMKKLVESGAAHNIKSSKKMVERVMPQVWDVLEEVISEHPVLLNRAPTLHRLGIQAFQPVLVEGRAIKLHPLVCTAYNADFDGDQMAVHVPLSVEAQAEARFLMLAANNILKPSDGKPVCVPTQDMILGSYYLTLDKDGVKGEGKIFSNPDEVMMAYQTGAINIHAKIKVRMTKEKDGKIISGIIETTPGKLIFNDSIPQDLGFVDRSNPENEFKLEIDFLVTKKNLGKIIDKCYTKYGATETSTMLDKIKARGYHYSTIGAITISVSDMTVPESKNRLLSDTDLAVEKIEKMYRRGFISEDERYERVIEKWTQTTEDVANALMDNLDRFNPIFMMADSGARGSKSQIKQLAGMRGLMANPSGKIIELPIRASFREGLDVLEYFISTHGARKGNADTALKTADSGYLTRRLVDVSQDVIVREEDCGSTHGYEVSEIKEGNEVIETLTERLTGRYSIEDIVDPQTGEVIVPADTYMNADLAEKVEKHGVKKVNIRSVFTCKSKHGVCAKCYGMNMATANKINIGESVGIVAAQSIGEPGTQLTMRTFHTGGVAGADITQGLPRVEELFEARKPKGLAIITEVAGTVKLEETKKKRIVHVIDDEGVDKSYDIPFGSRIKVSNGSRIEAGDEITEGSVNPHDILAIKGPKEVKNYLLSEVQKVYRLQGVDINDKHLEVVVRQMTRKVKIKESGDTELLPGTLVDVFDFEEVNEKIRQQGGEEATGDIALLGITKAALATDSFLSAASFQETTRVLTDAAIKGKSDPLLGLKENVIIGKLIPAGTGMMRYRSIKLNTDKEENDEELVNVDEA.

Zn(2+) contacts are provided by Cys-67, Cys-69, Cys-82, and Cys-85. Mg(2+)-binding residues include Asp-457, Asp-459, and Asp-461. Positions 802, 876, 883, and 886 each coordinate Zn(2+).

It belongs to the RNA polymerase beta' chain family. The RNAP catalytic core consists of 2 alpha, 1 beta, 1 beta' and 1 omega subunit. When a sigma factor is associated with the core the holoenzyme is formed, which can initiate transcription. Mg(2+) is required as a cofactor. It depends on Zn(2+) as a cofactor.

It catalyses the reaction RNA(n) + a ribonucleoside 5'-triphosphate = RNA(n+1) + diphosphate. DNA-dependent RNA polymerase catalyzes the transcription of DNA into RNA using the four ribonucleoside triphosphates as substrates. In Clostridium novyi (strain NT), this protein is DNA-directed RNA polymerase subunit beta'.